The chain runs to 489 residues: 3-octaprenyl-4-hydroxybenzoate carboxy-lyase (489 aa).

Asn-172 provides a ligand contact to Mn(2+). Residues 175–177 (IYR), 189–191 (RWL), and 194–195 (RG) contribute to the prenylated FMN site. Glu-238 serves as a coordination point for Mn(2+). Catalysis depends on Asp-287, which acts as the Proton donor.

Belongs to the UbiD family. Homohexamer. The cofactor is prenylated FMN. Requires Mn(2+) as cofactor.

The protein localises to the cell membrane. It catalyses the reaction a 4-hydroxy-3-(all-trans-polyprenyl)benzoate + H(+) = a 2-(all-trans-polyprenyl)phenol + CO2. It participates in cofactor biosynthesis; ubiquinone biosynthesis. Catalyzes the decarboxylation of 3-octaprenyl-4-hydroxy benzoate to 2-octaprenylphenol, an intermediate step in ubiquinone biosynthesis. The chain is 3-octaprenyl-4-hydroxybenzoate carboxy-lyase from Glaesserella parasuis serovar 5 (strain SH0165) (Haemophilus parasuis).